A 319-amino-acid polypeptide reads, in one-letter code: Malate dehydrogenase (319 aa).

Residues 10-15 and aspartate 34 each bind NAD(+); that span reads GAGNIG. Residues arginine 83 and arginine 89 each contribute to the substrate site. Residues asparagine 96 and 119 to 121 each bind NAD(+); that span reads ITN. Residues asparagine 121 and arginine 152 each contribute to the substrate site. The active-site Proton acceptor is the histidine 176.

It belongs to the LDH/MDH superfamily. MDH type 3 family.

The enzyme catalyses (S)-malate + NAD(+) = oxaloacetate + NADH + H(+). Catalyzes the reversible oxidation of malate to oxaloacetate. The sequence is that of Malate dehydrogenase from Francisella tularensis subsp. tularensis (strain FSC 198).